The sequence spans 179 residues: Large ribosomal subunit protein uL6 (179 aa).

This sequence belongs to the universal ribosomal protein uL6 family. As to quaternary structure, part of the 50S ribosomal subunit.

Functionally, this protein binds to the 23S rRNA, and is important in its secondary structure. It is located near the subunit interface in the base of the L7/L12 stalk, and near the tRNA binding site of the peptidyltransferase center. This chain is Large ribosomal subunit protein uL6, found in Methylacidiphilum infernorum (isolate V4) (Methylokorus infernorum (strain V4)).